The following is a 104-amino-acid chain: Pyrimidine/purine nucleoside phosphorylase (104 aa).

The protein belongs to the nucleoside phosphorylase PpnP family.

The catalysed reaction is a purine D-ribonucleoside + phosphate = a purine nucleobase + alpha-D-ribose 1-phosphate. It carries out the reaction adenosine + phosphate = alpha-D-ribose 1-phosphate + adenine. The enzyme catalyses cytidine + phosphate = cytosine + alpha-D-ribose 1-phosphate. It catalyses the reaction guanosine + phosphate = alpha-D-ribose 1-phosphate + guanine. The catalysed reaction is inosine + phosphate = alpha-D-ribose 1-phosphate + hypoxanthine. It carries out the reaction thymidine + phosphate = 2-deoxy-alpha-D-ribose 1-phosphate + thymine. The enzyme catalyses uridine + phosphate = alpha-D-ribose 1-phosphate + uracil. It catalyses the reaction xanthosine + phosphate = alpha-D-ribose 1-phosphate + xanthine. Its function is as follows. Catalyzes the phosphorolysis of diverse nucleosides, yielding D-ribose 1-phosphate and the respective free bases. Can use uridine, adenosine, guanosine, cytidine, thymidine, inosine and xanthosine as substrates. Also catalyzes the reverse reactions. This chain is Pyrimidine/purine nucleoside phosphorylase, found in Colwellia psychrerythraea (strain 34H / ATCC BAA-681) (Vibrio psychroerythus).